Consider the following 725-residue polypeptide: ABC transporter G family member 19 (725 aa).

Positions 73–325 constitute an ABC transporter domain; that stretch reads LNFNNLQYDV…FSDFGRPIPE (253 aa). Position 117 to 124 (117 to 124) interacts with ATP; sequence GASGAGKS. The 211-residue stretch at 419–629 folds into the ABC transmembrane type-2 domain; sequence FETFILAKRY…PYEAVLINEF (211 aa). The next 7 membrane-spanning stretches (helical) occupy residues 438-458, 473-493, 515-535, 537-557, 577-597, 606-626, and 698-718; these read LVGTRIATVMVTGCLLATVYW, LFAFVVPTMFYCCLDNVPVFI, ISHSLVSLPQLLAPSLVFSAI, FWTVGLSGGLEGFVFYCLLIY, IMLCYMVSITYLAYCLLLSGF, FYWTWFHYISILKYPYEAVLI, and LWITFASGLFFRILFYFALLF.

Belongs to the ABC transporter superfamily. ABCG family. Eye pigment precursor importer (TC 3.A.1.204) subfamily.

The protein resides in the vacuole membrane. Functionally, confers selective resistance to kanamycin. The polypeptide is ABC transporter G family member 19 (ABCG19) (Arabidopsis thaliana (Mouse-ear cress)).